Consider the following 385-residue polypeptide: DNA double-strand break repair protein Mre11 (385 aa).

Mn(2+)-binding residues include aspartate 14, histidine 16, and aspartate 58. The Proton donor role is filled by histidine 94. Mn(2+)-binding residues include histidine 180, histidine 216, and histidine 218.

The protein belongs to the MRE11/RAD32 family. In terms of assembly, homodimer. Forms a heterotetramer composed of two Mre11 subunits and two Rad50 subunits. Homodimerization facilitates DNA binding. Mn(2+) is required as a cofactor.

Its activity is regulated as follows. Nuclease activity is regulated by Rad50. The mirin-derivative PFM39, specifically inhibits the 3'-5' exonuclease activity. The N-alkylated mirin-derivatives PFM03 and PFM01 specifically inhibit the endonuclease activity. Its function is as follows. Part of the Rad50/Mre11 complex, which is involved in the early steps of DNA double-strand break (DSB) repair. The complex may facilitate opening of the processed DNA ends to aid in the recruitment of HerA and NurA. Mre11 binds to DSB ends and has both double-stranded 3'-5' exonuclease activity and single-stranded endonuclease activity. This chain is DNA double-strand break repair protein Mre11, found in Thermotoga maritima (strain ATCC 43589 / DSM 3109 / JCM 10099 / NBRC 100826 / MSB8).